A 308-amino-acid chain; its full sequence is MTHLFALSELPLDEIHRLLDEAERFRSGRIWRPAAPMYVANLFFEPSTRTKCSFEMAERKLGLHVIPFDPERSSVQKGETLYDTVRTLEAIGVDAVVIRHHEDAYFEALRHAVGIPIINAGDGCGHHPTQSLLDLLTIRQEFGAFTGLTVAIIGDIRHSRVARSNAEVLTRLGANVLFSGPEEWKDETNPYGTYVEVDEAIARADVVMLLRIQHERHAETMGLTKEEYHARYGLTLERARRMKSGAIILHPAPVNRGVEIASELVEAKASRIFKQMENGVYVRMAVLKRAMEGRMEHGRMAEKWHVVQ.

Carbamoyl phosphate contacts are provided by R49 and T50. Residue K77 participates in L-aspartate binding. Carbamoyl phosphate-binding residues include R99, H127, and Q130. R160 and R211 together coordinate L-aspartate. A252 and P253 together coordinate carbamoyl phosphate.

Belongs to the aspartate/ornithine carbamoyltransferase superfamily. ATCase family. Heterododecamer (2C3:3R2) of six catalytic PyrB chains organized as two trimers (C3), and six regulatory PyrI chains organized as three dimers (R2).

It catalyses the reaction carbamoyl phosphate + L-aspartate = N-carbamoyl-L-aspartate + phosphate + H(+). It functions in the pathway pyrimidine metabolism; UMP biosynthesis via de novo pathway; (S)-dihydroorotate from bicarbonate: step 2/3. In terms of biological role, catalyzes the condensation of carbamoyl phosphate and aspartate to form carbamoyl aspartate and inorganic phosphate, the committed step in the de novo pyrimidine nucleotide biosynthesis pathway. The protein is Aspartate carbamoyltransferase catalytic subunit of Bacillus caldolyticus.